A 105-amino-acid chain; its full sequence is Transcription factor S (105 aa).

The Zn(2+) site is built by cysteine 5, cysteine 8, cysteine 21, cysteine 24, cysteine 66, cysteine 69, cysteine 94, and cysteine 97. A C4-type zinc finger spans residues 5 to 24; that stretch reads CPKCNNIMLPKNGRLKCTVC. The TFIIS-type zinc-finger motif lies at 62–102; sequence TRIECPSCGNMEASWWLQQTRCADEPETRFYKCKKCGHTWR.

It belongs to the archaeal RpoM/eukaryotic RPA12/RPB9/RPC11 RNA polymerase family.

Induces RNA cleavage activity in the RNA polymerase. In its presence, the cleavage activity of the RNA polymerase truncates the RNA back to position +15 in a stepwise manner by releasing mainly dinucleotides from the 3'-end of the nascent RNA. The truncated RNAs are able to continue elongation. Involved in transcriptional proofreading and fidelity. Misincorporation of nucleotides during elongation of transcription leads to arrested elongation complexes which are rescued by TFS-promoted removal of a dinucleotide from the 3'-end. TFS is able to induce a cleavage resynthesis cycle in stalled elongation complexes (resulting from the next missing nucleotide or a reduced incorporation rate of a wrong nucleotide) preventing misincorporation and enabling proofreading in a post-incorporation manner. Pausing of elongation complexes is the main determinant of TFS-induced RNA cleavage. The protein is Transcription factor S of Methanothermococcus thermolithotrophicus (Methanococcus thermolithotrophicus).